Consider the following 188-residue polypeptide: ATP synthase subunit delta (188 aa).

Belongs to the ATPase delta chain family. As to quaternary structure, F-type ATPases have 2 components, F(1) - the catalytic core - and F(0) - the membrane proton channel. F(1) has five subunits: alpha(3), beta(3), gamma(1), delta(1), epsilon(1). F(0) has three main subunits: a(1), b(2) and c(10-14). The alpha and beta chains form an alternating ring which encloses part of the gamma chain. F(1) is attached to F(0) by a central stalk formed by the gamma and epsilon chains, while a peripheral stalk is formed by the delta and b chains.

It is found in the cell inner membrane. Functionally, f(1)F(0) ATP synthase produces ATP from ADP in the presence of a proton or sodium gradient. F-type ATPases consist of two structural domains, F(1) containing the extramembraneous catalytic core and F(0) containing the membrane proton channel, linked together by a central stalk and a peripheral stalk. During catalysis, ATP synthesis in the catalytic domain of F(1) is coupled via a rotary mechanism of the central stalk subunits to proton translocation. In terms of biological role, this protein is part of the stalk that links CF(0) to CF(1). It either transmits conformational changes from CF(0) to CF(1) or is implicated in proton conduction. This is ATP synthase subunit delta from Rhizobium johnstonii (strain DSM 114642 / LMG 32736 / 3841) (Rhizobium leguminosarum bv. viciae).